A 354-amino-acid polypeptide reads, in one-letter code: Dual-specificity RNA methyltransferase RlmN (354 aa).

Residue E86 is the Proton acceptor of the active site. One can recognise a Radical SAM core domain in the interval 105 to 338; the sequence is RHARYTICVS…CTIRQSKGLD (234 aa). An intrachain disulfide couples C112 to C343. C119, C123, and C126 together coordinate [4Fe-4S] cluster. S-adenosyl-L-methionine is bound by residues 169–170, S201, 224–226, and N300; these read GE and SLH. The active-site S-methylcysteine intermediate is C343.

Belongs to the radical SAM superfamily. RlmN family. The cofactor is [4Fe-4S] cluster.

The protein resides in the cytoplasm. The catalysed reaction is adenosine(2503) in 23S rRNA + 2 reduced [2Fe-2S]-[ferredoxin] + 2 S-adenosyl-L-methionine = 2-methyladenosine(2503) in 23S rRNA + 5'-deoxyadenosine + L-methionine + 2 oxidized [2Fe-2S]-[ferredoxin] + S-adenosyl-L-homocysteine. It carries out the reaction adenosine(37) in tRNA + 2 reduced [2Fe-2S]-[ferredoxin] + 2 S-adenosyl-L-methionine = 2-methyladenosine(37) in tRNA + 5'-deoxyadenosine + L-methionine + 2 oxidized [2Fe-2S]-[ferredoxin] + S-adenosyl-L-homocysteine. Specifically methylates position 2 of adenine 2503 in 23S rRNA and position 2 of adenine 37 in tRNAs. m2A2503 modification seems to play a crucial role in the proofreading step occurring at the peptidyl transferase center and thus would serve to optimize ribosomal fidelity. The polypeptide is Dual-specificity RNA methyltransferase RlmN (Campylobacter fetus subsp. fetus (strain 82-40)).